Reading from the N-terminus, the 619-residue chain is Lysophospholipid acyltransferase (619 aa).

Residues 1-19 (MYNPVDAVLTKIITNYGID) are Lumenal-facing. Residues 20 to 39 (SFTLRYAICLLGSFPLNAIL) traverse the membrane as a helical segment. Topologically, residues 40–51 (KRIPEKRIGLKC) are cytoplasmic. A helical membrane pass occupies residues 52–72 (CFIISMSMFYLFGVLNLVSGF). The Lumenal portion of the chain corresponds to 73–92 (RTLFISTMFTYLISRFYRSK). The chain crosses the membrane as a helical span at residues 93 to 113 (FMPHLNFMFVMGHLAINHIHA). Over 114 to 231 (QFLNEQTQTT…GERRQIPKNG (118 aa)) the chain is Cytoplasmic. Asp146 functions as the Nucleophile in the catalytic mechanism. The helical transmembrane segment at 232 to 252 (KLALWKVVQGLAWMILSTLGM) threads the bilayer. Over 253 to 274 (KHFPVKYVLDKDGFPTRSFIFR) the chain is Lumenal. The helical transmembrane segment at 275–295 (IHYLFLLGFIHRFKYYAAWTI) threads the bilayer. The Cytoplasmic portion of the chain corresponds to 296–429 (SEGSCILCGL…TPLPSKKIYD (134 aa)). Glu297 functions as the Nucleophile in the catalytic mechanism. His382 is an active-site residue. Residues 430 to 450 (LVGIYAIKLAFGYMVQPFIIL) traverse the membrane as a helical segment. Over 451–456 (DLKPSL) the chain is Lumenal. A helical membrane pass occupies residues 457–477 (MVWGSVYFYVHIIVAFSFFLF). Residues 478–619 (RGPYAKQVTE…SPKPISKKEE (142 aa)) lie on the Cytoplasmic side of the membrane. Ser513 bears the Phosphoserine mark. The stretch at 545–593 (ELEKWDNAKEDWEDFCKDYKEWRNKNGLEIEEENLSKAFERFKQEFSNA) forms a coiled coil. The tract at residues 592 to 619 (NAASGSGERVRKMSFSGYSPKPISKKEE) is disordered. A phosphoserine mark is found at Ser605, Ser610, and Ser615.

It belongs to the membrane-bound acyltransferase family.

Its subcellular location is the endoplasmic reticulum membrane. It carries out the reaction a 1-acyl-sn-glycero-3-phosphate + an acyl-CoA = a 1,2-diacyl-sn-glycero-3-phosphate + CoA. It catalyses the reaction a 1-acyl-sn-glycero-3-phosphocholine + an acyl-CoA = a 1,2-diacyl-sn-glycero-3-phosphocholine + CoA. The enzyme catalyses 1-acyl-sn-glycero-3-phospho-(1'-sn-glycerol) + an acyl-CoA = a 1,2-diacyl-sn-glycero-3-phospho-(1'-sn-glycerol) + CoA. The catalysed reaction is a 1-acyl-sn-glycero-3-phospho-(1D-myo-inositol) + an acyl-CoA = a 1,2-diacyl-sn-glycero-3-phospho-(1D-myo-inositol) + CoA. It carries out the reaction a 1-acyl-sn-glycero-3-phospho-L-serine + an acyl-CoA = a 1,2-diacyl-sn-glycero-3-phospho-L-serine + CoA. It catalyses the reaction a 1-acyl-sn-glycero-3-phosphoethanolamine + an acyl-CoA = a 1,2-diacyl-sn-glycero-3-phosphoethanolamine + CoA. The enzyme catalyses 1-(9Z-octadecenoyl)-sn-glycero-3-phosphoethanolamine + (9Z)-octadecenoyl-CoA = 1,2-di-(9Z-octadecenoyl)-sn-glycero-3-phosphoethanolamine + CoA. The catalysed reaction is 1-(9Z-octadecenoyl)-sn-glycero-3-phosphoethanolamine + (9Z)-hexadecenoyl-CoA = 1-(9Z)-octadecenoyl-2-(9Z)-hexadecenoyl-sn-glycero-3-phosphoethanolamine + CoA. It carries out the reaction 1-(9Z-octadecenoyl)-sn-glycero-3-phosphoethanolamine + hexadecanoyl-CoA = 1-(9Z-octadecenoyl)-2-hexadecanoyl-sn-glycero-3-phosphoethanolamine + CoA. It catalyses the reaction 1-(9Z-octadecenoyl)-sn-glycero-3-phosphoethanolamine + tetradecanoyl-CoA = 1-(9Z)-octadecenoyl-2-tetradecanoyl-sn-glycero-3-phosphoethanolamine + CoA. The enzyme catalyses 1-(9Z-octadecenoyl)-sn-glycero-3-phosphate + (9Z)-octadecenoyl-CoA = 1,2-di-(9Z-octadecenoyl)-sn-glycero-3-phosphate + CoA. The catalysed reaction is (9Z)-hexadecenoyl-CoA + 1-hexadecanoyl-sn-glycero-3-phosphocholine = 1-hexadecanoyl-2-(9Z-hexadecenoyl)-sn-glycero-3-phosphocholine + CoA. It carries out the reaction 1-hexadecanoyl-sn-glycero-3-phosphocholine + (9Z)-octadecenoyl-CoA = 1-hexadecanoyl-2-(9Z-octadecenoyl)-sn-glycero-3-phosphocholine + CoA. It catalyses the reaction 1-tetradecanoyl-sn-glycero-3-phosphoethanolamine + (9Z)-octadecenoyl-CoA = 1-tetradecanoyl-2-(9Z-octadecenoyl)-sn-glycero-3-phosphoethanolamine + CoA. The enzyme catalyses 1-(9Z-octadecenoyl)-sn-glycero-3-phospho-L-serine + (9Z)-octadecenoyl-CoA = 1,2-di-(9Z)-octadecenoyl-sn-glycero-3-phospho-L-serine + CoA. The catalysed reaction is a 1-acyl-sn-glycero-3-phospho-(1D-myo-inositol) + (9Z)-octadecenoyl-CoA = a 1-acyl-2-(9Z-octadecenoyl)-sn-glycero-3-phospho-(1D-myo-inositol) + CoA. Its pathway is lipid metabolism; phospholipid metabolism. Functionally, broad specificity membrane-bound O-acyltransferase that mediates the incorporation of unsaturated acyl chains into the sn-2 position of various lysophospholipids. Preferentially acylates lysophosphocholine (LPC), but also lysophosphoethanolamine (LPE), lysophosphatidylglycerol (LPG), lysophosphatidic acid (LPA), lysophosphoethanolamine (LPE), lysophosphoinositol (LPI), and lysophosphoserine (LPS). Prefers an acyl residue to an alkyl residue at the sn-1 position of lysophospholipid acceptors. Accepts acyl chains in acyl-CoA from C-2 to C-20, and shows strong preference for unsaturated acyl-CoAs with 16-20 carbons. Together with SLC1, plays a central role in phosphatidic acid (PA) biosynthesis. PA is the intermediate, from which all glycerophospholipids are synthesized. Can also introduce an acyl chain at the sn-1 position of the lysophosphatidylcholine analog 1-hydroxy-2-hexadecyl-sn-glycero-3-phosphocholine (HHPC). This Saccharomyces cerevisiae (strain ATCC 204508 / S288c) (Baker's yeast) protein is Lysophospholipid acyltransferase.